Reading from the N-terminus, the 261-residue chain is Probable membrane transporter protein XF_0764 (261 aa).

The next 8 membrane-spanning stretches (helical) occupy residues 6–26, 29–49, 78–98, 99–119, 150–170, 175–195, 205–225, and 239–259; these read LIVT…LGGG, ILAT…IAIG, VIFA…GMLI, DGQR…LLML, AASG…LIFA, TINA…ITTL, WTIA…GTLL, and VFGL…WASL.

The protein belongs to the 4-toluene sulfonate uptake permease (TSUP) (TC 2.A.102) family.

It localises to the cell membrane. The protein is Probable membrane transporter protein XF_0764 of Xylella fastidiosa (strain 9a5c).